The following is a 446-amino-acid chain: MQTSLKIAVVGSGLVGSLLAIYLKKAGHTVHVYDRSPDIRKINFSGRSINLAMSNRGWKALDGVGVGDAVREIAIPMDKRAIHLVDKLNFQNYGQEGESIYSISRGTLNRKMIDLAENAGAEFYFEQKIWDVTLSDATLHIGESERGEWEERKYDMVFGADGAFSRIRHRMQRQSMFNYSQEFLNMGYKELNIPANADRTHKLDKNSFHIWPRGEYMLIALPNLDGSFTCTLFMPFEGENSFESLTDRKMVEDFFEKNFPDSIEVIPELANDFFKNPTSTLVTMKCFPWTYEDKIALIGDACHAIVPFYGQGMNAGFEDITVLNEMIEKFGDDWKKIFTEYQISRKPNADAIAELSYRNFMEMSTKTADEKFLLQKKIEKVFSDKHPDKWIPLYSRVTFSDRPYAEALAIGDFQNGIMEEVLKLDNIENIWNTPEVENKILELLQK.

This sequence belongs to the aromatic-ring hydroxylase family. KMO subfamily. FAD is required as a cofactor.

The catalysed reaction is L-kynurenine + NADPH + O2 + H(+) = 3-hydroxy-L-kynurenine + NADP(+) + H2O. The protein operates within cofactor biosynthesis; NAD(+) biosynthesis; quinolinate from L-kynurenine: step 1/3. In terms of biological role, catalyzes the hydroxylation of L-kynurenine (L-Kyn) to form 3-hydroxy-L-kynurenine (L-3OHKyn). Required for synthesis of quinolinic acid. In Flavobacterium johnsoniae (strain ATCC 17061 / DSM 2064 / JCM 8514 / BCRC 14874 / CCUG 350202 / NBRC 14942 / NCIMB 11054 / UW101) (Cytophaga johnsonae), this protein is Kynurenine 3-monooxygenase.